The sequence spans 355 residues: 3-dehydroquinate synthase (355 aa).

NAD(+)-binding positions include 71–76 (EGEERK), 105–109 (GVVGD), 129–130 (TS), K142, and K151. Zn(2+) contacts are provided by E184, H246, and H263.

Belongs to the sugar phosphate cyclases superfamily. Dehydroquinate synthase family. NAD(+) is required as a cofactor. Requires Co(2+) as cofactor. It depends on Zn(2+) as a cofactor.

It localises to the cytoplasm. The catalysed reaction is 7-phospho-2-dehydro-3-deoxy-D-arabino-heptonate = 3-dehydroquinate + phosphate. Its pathway is metabolic intermediate biosynthesis; chorismate biosynthesis; chorismate from D-erythrose 4-phosphate and phosphoenolpyruvate: step 2/7. Functionally, catalyzes the conversion of 3-deoxy-D-arabino-heptulosonate 7-phosphate (DAHP) to dehydroquinate (DHQ). The chain is 3-dehydroquinate synthase from Streptococcus pneumoniae serotype 4 (strain ATCC BAA-334 / TIGR4).